The primary structure comprises 75 residues: Pi-hexatoxin-Hi1a (75 aa).

6 disulfide bridges follow: Cys3/Cys18, Cys10/Cys23, Cys17/Cys33, Cys40/Cys55, Cys47/Cys60, and Cys54/Cys71. 2 Domain repeats span residues 3–33 (CIRK…FEVC) and 40–71 (CLVK…SSVC). Positions 3-71 (CIRKWLSCVD…KRSGNKSSVC (69 aa)) are 2 X approximate repeats with cysteine pattern C-C-CC-C-C.

Belongs to the psalmotoxin-1 family. Double-knot toxin subfamily. Expressed by the venom gland.

It is found in the secreted. In terms of biological role, this toxin potently and selectively inhibits ASIC1a (IC(50)=0.4 nM on rASIC1a and IC(50)=0.52 nM on hASIC1a), an isoform of the gene ASIC1. It incompletely inhibits ASIC1a activation in a pH-independent and slowly reversible manner (Tau(off)=14.2 minutes for rASIC1a and 31.8 minutes for hASIC1a). This toxin acts by binding to and stabilizing the closed state of the channel, thereby impeding the transition into a conducting state. This toxin may bind to the acidic pocket of ASIC1a, since mutation of a key residue of this pocket (Arg-350) abolishes the ability of the toxin to inhibit ASIC1a. In addition, it shows antiparasitic activities, since it moderately inhibits the larval development of the major pathogenic nematode of ruminants (H.contortus, IC(50)=22.9 uM). In vivo, this toxin protects the brain from neuronal injury when administered up to 8 hours after stroke onset. The polypeptide is Pi-hexatoxin-Hi1a (Hadronyche infensa (Fraser island funnel-web spider)).